A 679-amino-acid polypeptide reads, in one-letter code: Protein white (679 aa).

The disordered stretch occupies residues 1-34; sequence MGQEDQEVLIRGGKATSTSAESLNNNNEQPYEQS. The segment covering 15–34 has biased composition (polar residues); it reads ATSTSAESLNNNNEQPYEQS. The ABC transporter domain maps to 84–332; that stretch reads NRVKGVFCNE…FSYIGATCPT (249 aa). ATP is bound at residue 121-128; it reads GSSGAGKT. The next 5 membrane-spanning stretches (helical) occupy residues 427–445, 457–477, 507–525, 534–555, and 568–586; these read LLQTTMVAVLIGLIFLGQQ, AIFLFLTNMTFQNSFATITVF, LPLFLVVPFLFTAIAYPLI, FFTALALVTLVANVSTSFGYLI, and VGPPVIIPFLLFGGFFLNS. 2 N-linked (GlcNAc...) asparagine glycosylation sites follow: N628 and N643. Residues 651 to 670 traverse the membrane as a helical segment; sequence FDFIGLALLIVGFRISAYIA.

This sequence belongs to the ABC transporter superfamily. ABCG family. Eye pigment precursor importer (TC 3.A.1.204) subfamily.

The protein localises to the membrane. Functionally, may be part of a membrane-spanning permease system necessary for the transport of pigment precursors into pigment cells responsible for eye color. This chain is Protein white (W), found in Ceratitis capitata (Mediterranean fruit fly).